We begin with the raw amino-acid sequence, 396 residues long: NADH-quinone oxidoreductase subunit D (396 aa).

It belongs to the complex I 49 kDa subunit family. NDH-1 is composed of 14 different subunits. Subunits NuoB, C, D, E, F, and G constitute the peripheral sector of the complex.

It localises to the cell inner membrane. The catalysed reaction is a quinone + NADH + 5 H(+)(in) = a quinol + NAD(+) + 4 H(+)(out). Its function is as follows. NDH-1 shuttles electrons from NADH, via FMN and iron-sulfur (Fe-S) centers, to quinones in the respiratory chain. The immediate electron acceptor for the enzyme in this species is believed to be ubiquinone. Couples the redox reaction to proton translocation (for every two electrons transferred, four hydrogen ions are translocated across the cytoplasmic membrane), and thus conserves the redox energy in a proton gradient. This Rhodopseudomonas palustris (strain BisB18) protein is NADH-quinone oxidoreductase subunit D.